Here is a 151-residue protein sequence, read N- to C-terminus: Chaperonin GroEL (151 aa).

Residue Asp41–Thr45 participates in ATP binding.

The protein belongs to the chaperonin (HSP60) family. In terms of assembly, forms a cylinder of 14 subunits composed of two heptameric rings stacked back-to-back. Interacts with the co-chaperonin GroES.

The protein resides in the cytoplasm. It carries out the reaction ATP + H2O + a folded polypeptide = ADP + phosphate + an unfolded polypeptide.. Functionally, together with its co-chaperonin GroES, plays an essential role in assisting protein folding. The GroEL-GroES system forms a nano-cage that allows encapsulation of the non-native substrate proteins and provides a physical environment optimized to promote and accelerate protein folding. This chain is Chaperonin GroEL, found in Mycobacterium marinum.